Reading from the N-terminus, the 308-residue chain is Putative mitochondrial transporter UCP3 (308 aa).

Residues Met1 to Pro10 lie on the Mitochondrial intermembrane side of the membrane. The chain crosses the membrane as a helical span at residues Pro11–Phe32. Solcar repeat units follow at residues Pro11 to Phe102, Ser111 to Lys202, and Asp211 to Ala296. Topologically, residues Pro33 to Ser73 are mitochondrial matrix. A helical membrane pass occupies residues Pro74–Tyr96. Residues Asp97 to Arg116 are Mitochondrial intermembrane-facing. The chain crosses the membrane as a helical span at residues Ile117–Pro133. Residues Thr134 to Trp179 lie on the Mitochondrial matrix side of the membrane. The chain crosses the membrane as a helical span at residues Pro180–Tyr196. Residues Asp197–Phe213 lie on the Mitochondrial intermembrane side of the membrane. A helical membrane pass occupies residues Pro214–Pro233. Topologically, residues Val234–Ala267 are mitochondrial matrix. The chain crosses the membrane as a helical span at residues Phe268–Tyr290. Residues Ser275–Leu297 form a purine nucleotide binding region. The Mitochondrial intermembrane portion of the chain corresponds to Glu291–Phe308.

This sequence belongs to the mitochondrial carrier (TC 2.A.29) family. In terms of assembly, interacts with HAX1; the interaction is direct and calcium-dependent.

The protein localises to the mitochondrion inner membrane. Its function is as follows. Putative transmembrane transporter that plays a role in mitochondrial metabolism via an as yet unclear mechanism. Originally, this mitochondrial protein was thought to act as a proton transmembrane transporter from the mitochondrial intermembrane space into the matrix, causing proton leaks through the inner mitochondrial membrane, thereby uncoupling mitochondrial membrane potential generation from ATP synthesis. However, this function is controversial and uncoupling may not be the function, or at least not the main function, but rather a consequence of more conventional metabolite transporter activity. This chain is Putative mitochondrial transporter UCP3, found in Rattus norvegicus (Rat).